The primary structure comprises 237 residues: Lipoprotein-releasing system ATP-binding protein LolD (237 aa).

An ABC transporter domain is found at 16–237; sequence LKCEGLTRIY…LDQGRLSEDA (222 aa). 52–59 contacts ATP; it reads GSSGSGKT.

Belongs to the ABC transporter superfamily. Lipoprotein translocase (TC 3.A.1.125) family. The complex is composed of two ATP-binding proteins (LolD) and two transmembrane proteins (LolC and LolE).

The protein localises to the cell inner membrane. In terms of biological role, part of the ABC transporter complex LolCDE involved in the translocation of mature outer membrane-directed lipoproteins, from the inner membrane to the periplasmic chaperone, LolA. Responsible for the formation of the LolA-lipoprotein complex in an ATP-dependent manner. The polypeptide is Lipoprotein-releasing system ATP-binding protein LolD (Chromohalobacter salexigens (strain ATCC BAA-138 / DSM 3043 / CIP 106854 / NCIMB 13768 / 1H11)).